Reading from the N-terminus, the 593-residue chain is Alanine--tRNA ligase (593 aa).

H456, H460, C558, and H562 together coordinate Zn(2+).

The protein belongs to the class-II aminoacyl-tRNA synthetase family. Zn(2+) is required as a cofactor.

Its subcellular location is the cytoplasm. It catalyses the reaction tRNA(Ala) + L-alanine + ATP = L-alanyl-tRNA(Ala) + AMP + diphosphate. Catalyzes the attachment of alanine to tRNA(Ala) in a two-step reaction: alanine is first activated by ATP to form Ala-AMP and then transferred to the acceptor end of tRNA(Ala). Also edits incorrectly charged Ser-tRNA(Ala) and Gly-tRNA(Ala) via its editing domain. The protein is Alanine--tRNA ligase (alaS) of Borrelia hermsii (strain HS1 / DAH).